Here is a 293-residue protein sequence, read N- to C-terminus: Kynurenine formamidase (293 aa).

Positions 84 to 88 (HGGYW) match the HGGXW motif. Catalysis depends on serine 153, which acts as the Nucleophile. Residues aspartate 236 and histidine 268 contribute to the active site.

The protein belongs to the kynurenine formamidase family. In terms of assembly, homodimer.

It is found in the cytoplasm. Its subcellular location is the cytosol. The protein localises to the nucleus. It catalyses the reaction N-formyl-L-kynurenine + H2O = L-kynurenine + formate + H(+). It functions in the pathway amino-acid degradation; L-tryptophan degradation via kynurenine pathway; L-kynurenine from L-tryptophan: step 2/2. Functionally, catalyzes the hydrolysis of N-formyl-L-kynurenine to L-kynurenine, the second step in the kynurenine pathway of tryptophan degradation. Kynurenine may be further oxidized to nicotinic acid, NAD(H) and NADP(H). Required for elimination of toxic metabolites. The chain is Kynurenine formamidase (afmid) from Danio rerio (Zebrafish).